The sequence spans 222 residues: MNTYFIAGTDTDAGKTVAACAFVQYLVKQSQQVAVMKPVASGCHWQNGQLVNEDALNLMRQSNTSFDYDRVNPYTFEAAIAPHIAAADSGVVIDKERLLKAVDWFHERPIDSLVIEGAGGWQLPLASGLRMPQVVKEVNAKVVLVVGLKLGCLNHALLSLQSIKQEGCDVAGWIAVQTGPEPMPRQAENLASLRELLDEKELASIPYLPGWTEEDLSIYFHK.

Position 12–17 (12–17 (DAGKTV)) interacts with ATP. Thr16 is a binding site for Mg(2+). The active site involves Lys37. Ser41 is a binding site for substrate. ATP-binding positions include Asp54, 116-119 (EGAG), 176-177 (VQ), 206-208 (PYL), and Glu213. Positions 54 and 116 each coordinate Mg(2+).

The protein belongs to the dethiobiotin synthetase family. In terms of assembly, homodimer. Mg(2+) is required as a cofactor.

It localises to the cytoplasm. The catalysed reaction is (7R,8S)-7,8-diammoniononanoate + CO2 + ATP = (4R,5S)-dethiobiotin + ADP + phosphate + 3 H(+). The protein operates within cofactor biosynthesis; biotin biosynthesis; biotin from 7,8-diaminononanoate: step 1/2. Its function is as follows. Catalyzes a mechanistically unusual reaction, the ATP-dependent insertion of CO2 between the N7 and N8 nitrogen atoms of 7,8-diaminopelargonic acid (DAPA, also called 7,8-diammoniononanoate) to form a ureido ring. This is ATP-dependent dethiobiotin synthetase BioD from Idiomarina loihiensis (strain ATCC BAA-735 / DSM 15497 / L2-TR).